Here is a 151-residue protein sequence, read N- to C-terminus: UPF0178 protein Sde_3033 (151 aa).

This sequence belongs to the UPF0178 family.

The sequence is that of UPF0178 protein Sde_3033 from Saccharophagus degradans (strain 2-40 / ATCC 43961 / DSM 17024).